The following is a 585-amino-acid chain: Amyloid protein-binding protein 2 (585 aa).

8 TPR repeats span residues 50-83 (QGRLCQLGSEFCELEVFAKVLRALDKRHLLHHCF), 120-153 (IQVGFVLGGFLSDAGWYSDAEKVFLSCLQLCTLH), 206-239 (AALYGELCALLFAKSHYDEAYKWCVEAMKEITSG), 288-321 (SDTLLDYGFYLLNVDNICQSVAIYQAALDIRQSV), 333-367 (HEDLAYSSYVHQYSSGKFDNALFHAERAIGIITHI), 429-462 (AKHYGNLGRLYQSMRKFKEAEEMHIKAIQIKEQL), 471-505 (ALSVGHLASLYNYDMNQYENAEKLYLRSIAIGKKL), and 514-547 (EYDYRGLIKLYNSTGNYEKVFEYHNVLSNWNRLR).

Component of a CRL2 E3 ubiquitin-protein ligase complex, also named ECS (Elongin BC-CUL2/5-SOCS-box protein) complex, composed of CUL2, Elongin BC (ELOB and ELOC), RBX1 and substrate-specific adapter APPBP2. Interacts with APP; APP interaction inhibits the E3 ubiquitin-protein ligase activity of the CRL2(APPBP2) complex. Post-translationally, rapidly degraded by the proteasome upon overexpression of a C-terminal fragment of APP.

Its subcellular location is the nucleus. The protein localises to the cytoplasm. The protein resides in the cytoskeleton. It is found in the membrane. It functions in the pathway protein modification; protein ubiquitination. With respect to regulation, E3 ubiquitin-protein ligase activity of the CRL2(APPBP2) complex is inhibited by APP. In terms of biological role, substrate-recognition component of a Cul2-RING (CRL2) E3 ubiquitin-protein ligase complex of the DesCEND (destruction via C-end degrons) pathway, which recognizes a C-degron located at the extreme C terminus of target proteins, leading to their ubiquitination and degradation. The C-degron recognized by the DesCEND pathway is usually a motif of less than ten residues and can be present in full-length proteins, truncated proteins or proteolytically cleaved forms. The CRL2(APPBP2) complex specifically recognizes proteins with a -Arg-Xaa-Xaa-Gly degron at the C-terminus, leading to their ubiquitination and degradation. The CRL2(APPBP2) complex mediates ubiquitination and degradation of truncated SELENOV selenoproteins produced by failed UGA/Sec decoding, which end with a -Arg-Xaa-Xaa-Gly degron. May play a role in intracellular protein transport: may be involved in the translocation of APP along microtubules toward the cell surface. This is Amyloid protein-binding protein 2 from Rattus norvegicus (Rat).